The following is a 66-amino-acid chain: Large ribosomal subunit protein bL35 (66 aa).

It belongs to the bacterial ribosomal protein bL35 family.

In Synechococcus sp. (strain ATCC 27144 / PCC 6301 / SAUG 1402/1) (Anacystis nidulans), this protein is Large ribosomal subunit protein bL35.